The chain runs to 396 residues: Tryptophan synthase beta chain (396 aa).

Residue lysine 86 is modified to N6-(pyridoxal phosphate)lysine.

Belongs to the TrpB family. In terms of assembly, tetramer of two alpha and two beta chains. Pyridoxal 5'-phosphate is required as a cofactor.

The enzyme catalyses (1S,2R)-1-C-(indol-3-yl)glycerol 3-phosphate + L-serine = D-glyceraldehyde 3-phosphate + L-tryptophan + H2O. It functions in the pathway amino-acid biosynthesis; L-tryptophan biosynthesis; L-tryptophan from chorismate: step 5/5. Its function is as follows. The beta subunit is responsible for the synthesis of L-tryptophan from indole and L-serine. In Pectobacterium carotovorum subsp. carotovorum (strain PC1), this protein is Tryptophan synthase beta chain.